Here is a 383-residue protein sequence, read N- to C-terminus: ATP phosphoribosyltransferase regulatory subunit (383 aa).

This sequence belongs to the class-II aminoacyl-tRNA synthetase family. HisZ subfamily. Heteromultimer composed of HisG and HisZ subunits.

The protein localises to the cytoplasm. Its pathway is amino-acid biosynthesis; L-histidine biosynthesis; L-histidine from 5-phospho-alpha-D-ribose 1-diphosphate: step 1/9. Required for the first step of histidine biosynthesis. May allow the feedback regulation of ATP phosphoribosyltransferase activity by histidine. The sequence is that of ATP phosphoribosyltransferase regulatory subunit from Cupriavidus taiwanensis (strain DSM 17343 / BCRC 17206 / CCUG 44338 / CIP 107171 / LMG 19424 / R1) (Ralstonia taiwanensis (strain LMG 19424)).